The chain runs to 382 residues: Protein delta homolog 2 (382 aa).

Positions 1–26 are cleaved as a signal peptide; it reads MPSGCRCLNLVCLLCILGATSQPARA. 4 consecutive EGF-like domains span residues 27–58, 62–89, 91–129, and 131–172; these read DDCSSHCDLAHGCCAPDGSCRCDPGWEGLHCE, RMPGCQHGTCHQPWQCICHSGWAGKFCD, DEHICTSQSPCQNGGQCVYDGGGEYHCVCLPGFRGRGCE, and KAGP…AHCE. At 27–305 the chain is on the extracellular side; it reads DDCSSHCDLA…RQEAGLGESS (279 aa). Cystine bridges form between Cys-29-Cys-40, Cys-33-Cys-46, Cys-48-Cys-57, Cys-66-Cys-71, Cys-79-Cys-88, Cys-95-Cys-107, Cys-101-Cys-117, Cys-119-Cys-128, Cys-135-Cys-148, Cys-142-Cys-160, Cys-162-Cys-171, Cys-178-Cys-189, Cys-183-Cys-198, Cys-200-Cys-209, Cys-216-Cys-227, Cys-221-Cys-236, and Cys-238-Cys-247. Residue Asn-157 is glycosylated (N-linked (GlcNAc...) asparagine). Positions 174-210 constitute an EGF-like 5; calcium-binding domain; that stretch reads NVDDCLMRPCANGATCIDGINRFSCLCPEGFAGRFCT. The EGF-like 6; calcium-binding domain maps to 212-248; that stretch reads NLDDCASRPCQRGARCRDRVHDFDCLCPSGYGGKTCE. Residues 306–326 traverse the membrane as a helical segment; it reads LVALVVFGSLTAALVLATVLL. Residues 327-382 are Cytoplasmic-facing; sequence TLRAWRRGICPTGPCCDPAPHYAPARQDQECQVSMLPAGFPLSPDLPPEPGKTTAL.

Its subcellular location is the membrane. In terms of biological role, regulates adipogenesis. This Rattus norvegicus (Rat) protein is Protein delta homolog 2 (Dlk2).